We begin with the raw amino-acid sequence, 252 residues long: 2-succinyl-6-hydroxy-2,4-cyclohexadiene-1-carboxylate synthase (252 aa).

Belongs to the AB hydrolase superfamily. MenH family. Monomer.

It catalyses the reaction 5-enolpyruvoyl-6-hydroxy-2-succinyl-cyclohex-3-ene-1-carboxylate = (1R,6R)-6-hydroxy-2-succinyl-cyclohexa-2,4-diene-1-carboxylate + pyruvate. Its pathway is quinol/quinone metabolism; 1,4-dihydroxy-2-naphthoate biosynthesis; 1,4-dihydroxy-2-naphthoate from chorismate: step 3/7. It functions in the pathway quinol/quinone metabolism; menaquinone biosynthesis. Functionally, catalyzes a proton abstraction reaction that results in 2,5-elimination of pyruvate from 2-succinyl-5-enolpyruvyl-6-hydroxy-3-cyclohexene-1-carboxylate (SEPHCHC) and the formation of 2-succinyl-6-hydroxy-2,4-cyclohexadiene-1-carboxylate (SHCHC). The chain is 2-succinyl-6-hydroxy-2,4-cyclohexadiene-1-carboxylate synthase from Escherichia coli O9:H4 (strain HS).